A 591-amino-acid polypeptide reads, in one-letter code: DDB1- and CUL4-associated factor 8 (591 aa).

A compositionally biased stretch (basic and acidic residues) spans M1–L14. The disordered stretch occupies residues M1 to A140. Phosphoserine is present on residues S21 and S22. The Nuclear export signal motif lies at I39–L50. Composition is skewed to basic and acidic residues over residues R65 to S99 and S118 to E131. S99, S123, and S124 each carry phosphoserine. WD repeat units lie at residues G185–D224, G228–N269, Q275–K315, E323–N363, E379–Y418, R426–F466, and D470–L509. Position 198 is an omega-N-methylarginine; by PRMT1 (R198). The tract at residues H552–S591 is disordered.

The protein belongs to the WD repeat DCAF8 family. In terms of assembly, interacts with DDB1, CUL4A and CUL4B. Interacts with KPNA1, KPNB1 and XPO1.

Its subcellular location is the nucleus. The protein resides in the cytoplasm. Its pathway is protein modification; protein ubiquitination. Functionally, may function as a substrate receptor for CUL4-DDB1 E3 ubiquitin-protein ligase complex. In Rattus norvegicus (Rat), this protein is DDB1- and CUL4-associated factor 8 (Dcaf8).